A 757-amino-acid chain; its full sequence is Amine oxidase [copper-containing] 2 (757 aa).

The Cytoplasmic segment spans residues 1–4 (MNLK). A helical membrane pass occupies residues 5–25 (VLLLLLGLSFLTVFALVYVLL). The Extracellular segment spans residues 26–757 (TRQGSFSQSP…NLPSFSYEGL (732 aa)). N-linked (GlcNAc...) asparagine glycans are attached at residues Asn-133, Asn-198, and Asn-226. Asp-381 serves as the catalytic Proton acceptor. An intrachain disulfide couples Cys-399 to Cys-425. The active-site Schiff-base intermediate with substrate; via topaquinone is the Tyr-466. Position 466 is a 2',4',5'-topaquinone (Tyr-466). Cu(2+) is bound by residues His-517 and His-519. Asp-526, Leu-527, Asp-528, Glu-569, Glu-638, Phe-660, and Asn-662 together coordinate Ca(2+). Asn-663 carries an N-linked (GlcNAc...) asparagine glycan. 3 residues coordinate Ca(2+): Glu-664, Asp-670, and Leu-671. Position 681 (His-681) interacts with Cu(2+). Cysteines 731 and 738 form a disulfide.

Belongs to the copper/topaquinone oxidase family. In terms of assembly, homodimer; disulfide-linked. Probably forms heterodimers with AOC3. Requires Cu(2+) as cofactor. The cofactor is Ca(2+). L-topaquinone is required as a cofactor. In terms of processing, topaquinone (TPQ) is generated by copper-dependent autoxidation of a specific tyrosyl residue. Significantly much highly expressed in retina.

Its subcellular location is the cell membrane. It catalyses the reaction 2-phenylethylamine + O2 + H2O = 2-phenylacetaldehyde + H2O2 + NH4(+). The enzyme catalyses tryptamine + O2 + H2O = indole-3-acetaldehyde + H2O2 + NH4(+). The catalysed reaction is tyramine + O2 + H2O = (4-hydroxyphenyl)acetaldehyde + H2O2 + NH4(+). Its function is as follows. Catalyzes the oxidative deamination of primary amines to the corresponding aldehydes with the concomitant production of hydrogen peroxide and ammonia. Has a preference for 2-phenylethylamine, tryptamine and tyramine. Could also act on methylamine and benzylamine but much less efficiently. The chain is Amine oxidase [copper-containing] 2 from Mus musculus (Mouse).